Here is a 1856-residue protein sequence, read N- to C-terminus: Zinc metalloprotease ZmpC (1856 aa).

Residues 1-42 (MSRKSIGEKRHSFSMRKLSVGLVSVTVSSFFLMSQGIQSVSA) form the signal peptide. Positions 43-95 (DNMESPIHYKYMTEGKLTDEEKSLLVEALPQLAEESDDTYYLVYRSQQFLPNT) are excised as a propeptide. Residues 92–96 (LPNTG) carry the LPXTG sorting signal motif. Position 95 is a pentaglycyl murein peptidoglycan amidated threonine (T95). The next 2 helical transmembrane spans lie at 97 to 117 (FNPT…VLLV) and 130 to 152 (FLLL…TSQI). The Extracellular segment spans residues 153–1856 (LSAYNSQLSI…TDDFRNSIYK (1704 aa)). Polar residues-rich tracts occupy residues 254–267 (NLSS…QVEQ) and 286–295 (NPVSATTVQS). The segment at 254–362 (NLSSNDSFAS…GEAAVREEEP (109 aa)) is disordered. Composition is skewed to basic and acidic residues over residues 322-334 (PGHE…REDL) and 351-361 (HEGEAAVREEE). One can recognise a G5 domain in the interval 417 to 496 (ALEVTTRNRT…NEVVKVGTLV (80 aa)). H1502 lines the Zn(2+) pocket. Residue E1503 is part of the active site. Zn(2+)-binding residues include H1506 and E1526.

The protein belongs to the peptidase M26 family. Requires Zn(2+) as cofactor. Post-translationally, the Gram-positive cell-wall anchor motif LPXTG is located in the N-terminal part, in contrast to such motifs in other known streptococcal and staphylococcal proteins. The protease could be cleaved by the sortase and anchored in the membrane via the two potential N-terminal transmembrane domains, whereas the propeptide located prior to the LPXTG motif would remain attached to the cell wall peptidoglycan by an amide bond.

It localises to the secreted. The protein resides in the cell wall. It is found in the membrane. Zinc metalloproteinase that specifically cleaves human matrix metalloproteinase 9 (MMP-9), leading to its activation. May play a role in pneumococcal virulence and pathogenicity in the lung. The chain is Zinc metalloprotease ZmpC (zmpC) from Streptococcus pneumoniae serotype 4 (strain ATCC BAA-334 / TIGR4).